A 1403-amino-acid polypeptide reads, in one-letter code: E3 ubiquitin-protein ligase SNT2 (1403 aa).

Residues 40–62 (SGAKTKGSNSQTPRNCKRTSNPA) form a disordered region. Over residues 45–62 (KGSNSQTPRNCKRTSNPA) the composition is skewed to polar residues. Residues 121–258 (VLLSANDTIY…RYTLKYYKVY (138 aa)) enclose the BAH domain. A PHD-type 1 zinc finger spans residues 317–369 (DKRCQFCKEWCIQKESLSCDECGVCAHLYCMDPPLDRKPNKDVVWTCFSCLQK). Residues 555–606 (LKEPSFTAVEIRKFEEAVEKFGSELRPVCEYVGTQPMSMIVRFYYNWKKTER) enclose the SANT domain. The segment at 1038–1097 (RTFCSVCKEKFNDNDNYEVVCGNCGLTVHYFCYAIKLPKDMKKNTNLKTFKWLCDPCSND) adopts a PHD-type 2 zinc-finger fold. Residues 1041-1095 (CSVCKEKFNDNDNYEVVCGNCGLTVHYFCYAIKLPKDMKKNTNLKTFKWLCDPCS) form an RING-type; degenerate zinc finger. A C2HC pre-PHD-type zinc finger spans residues 1105 to 1153 (TYQCSMCPTKDYDYDRYRSQSFKICPDALKCTSLGTWVHLVCSLFNEDI). The PHD-type 3; degenerate zinc-finger motif lies at 1177–1231 (FTCGVCRINGGGLVKCNKCQYRYHITCAQNSSNFKLMFEKKNMSVDTTLPCIKDV).

In terms of assembly, component of the Snt2C complex composed of SNT2, ECM5 and RPD3. Interacts with the E2 ubiquitin-conjugating enzyme UBC4 and histones H3 and H4. Binding is enhanced to methylated histone H3K36me3.

Its subcellular location is the cytoplasm. It localises to the nucleus. It catalyses the reaction S-ubiquitinyl-[E2 ubiquitin-conjugating enzyme]-L-cysteine + [acceptor protein]-L-lysine = [E2 ubiquitin-conjugating enzyme]-L-cysteine + N(6)-ubiquitinyl-[acceptor protein]-L-lysine.. Functionally, transcriptional regulator that, together with ECM5, recruits histone deacetylase RPD3 to a small number of promoters of stress-response genes in response to oxidative stress. Probable ubiquitin-protein ligase involved in the degradation-related ubiquitination of histones. Contributes to the post-translational regulation of histone protein levels by polyubiquitination of excess histones for subsequent degradation. The protein is E3 ubiquitin-protein ligase SNT2 of Saccharomyces cerevisiae (strain ATCC 204508 / S288c) (Baker's yeast).